The primary structure comprises 735 residues: Cyclic nucleotide-gated channel cone photoreceptor subunit alpha (735 aa).

Topologically, residues 1-214 (MAKINTQHSY…PSSNMYYNWL (214 aa)) are cytoplasmic. Positions 142-191 (VNFSNNTNEDKKEEKKEVKEEKKEEKKEEKKEEKKDDKKDDKKDDKKDDK) are disordered. Positions 149–191 (NEDKKEEKKEVKEEKKEEKKEEKKEEKKDDKKDDKKDDKKDDK) are enriched in basic and acidic residues. A helical membrane pass occupies residues 215–236 (TIIAAPVFYNWCMLICRACFDE). Residues 237-246 (LQIDHIKLWL) lie on the Extracellular side of the membrane. The helical transmembrane segment at 247–267 (FLDYCSDIIYVFDMFVRFRTG) threads the bilayer. Residues 268 to 292 (FLEQGLLVKDEKKLRDHYTQTVQFK) lie on the Cytoplasmic side of the membrane. Residues 293 to 311 (LDVLSLLPTDLAYLKLGLN) form a helical membrane-spanning segment. Residues 312-316 (YPELR) are Extracellular-facing. A helical transmembrane segment spans residues 317 to 335 (FNRLLRIARLFEFFDRTET). Over 336–342 (RTNYPNM) the chain is Cytoplasmic. The helical transmembrane segment at 343 to 366 (FRIGNLVLYILIIIHWNACIYFAI) threads the bilayer. Topologically, residues 367–389 (SKVIGFGTDSWVYPNVSIPEYGR) are extracellular. 2 helical membrane passes run 390 to 424 (LSRK…LFVV) and 425 to 449 (IDFL…SNMN). Over 450–735 (ASRAEFQAKV…PEKPEEQKKD (286 aa)) the chain is Cytoplasmic. Residues 532-654 (LLIE…DNLI), glutamate 591, and arginine 606 contribute to the 3',5'-cyclic GMP site. The disordered stretch occupies residues 715–735 (GSGSLSVGEPEPEKPEEQKKD). Basic and acidic residues predominate over residues 725-735 (EPEKPEEQKKD).

The protein belongs to the cyclic nucleotide-gated cation channel (TC 1.A.1.5) family.

The protein resides in the membrane. Visual signal transduction is mediated by a G-protein coupled cascade using cGMP as second messenger. This protein can be activated by cyclic GMP which leads to an opening of the cation channel and thereby causing a depolarization of cone photoreceptors. The sequence is that of Cyclic nucleotide-gated channel cone photoreceptor subunit alpha from Gallus gallus (Chicken).